We begin with the raw amino-acid sequence, 423 residues long: Serine hydroxymethyltransferase (423 aa).

Residues Leu-120 and 124–126 (GHL) contribute to the (6S)-5,6,7,8-tetrahydrofolate site. At Lys-229 the chain carries N6-(pyridoxal phosphate)lysine. (6S)-5,6,7,8-tetrahydrofolate-binding positions include Glu-245 and 353–355 (SPF).

It belongs to the SHMT family. Homodimer. Requires pyridoxal 5'-phosphate as cofactor.

The protein localises to the cytoplasm. It carries out the reaction (6R)-5,10-methylene-5,6,7,8-tetrahydrofolate + glycine + H2O = (6S)-5,6,7,8-tetrahydrofolate + L-serine. The protein operates within one-carbon metabolism; tetrahydrofolate interconversion. It functions in the pathway amino-acid biosynthesis; glycine biosynthesis; glycine from L-serine: step 1/1. Catalyzes the reversible interconversion of serine and glycine with tetrahydrofolate (THF) serving as the one-carbon carrier. This reaction serves as the major source of one-carbon groups required for the biosynthesis of purines, thymidylate, methionine, and other important biomolecules. Also exhibits THF-independent aldolase activity toward beta-hydroxyamino acids, producing glycine and aldehydes, via a retro-aldol mechanism. This is Serine hydroxymethyltransferase from Prochlorococcus marinus (strain MIT 9312).